The chain runs to 543 residues: MKSPTPALMLQGTSSNAGKSILTAAFCRILLQDGYRVAPFKAQNMALNSHVTADGLELGRAQAVQAAACRLDVDVRMNPVLLKPNSDTGSQVVVMGRPVGNMRVREYMAYKPVAFDAARAAYDSLAADVDVMVLEGAGSPAEVNLKAHDIVNMAMARHAEAKVLLVGDIDRGGVFASLVGTMELLDPWERDLVAGFVLNKFRGDATLLSPAYDVVTGRTGKPFLGVVPWLHDLGLPDEDSVSFRETLAGRAPDVPAGGGMLDIVLVDLPHISNFTDLDALRREPDVAVRVVRSPEQLGSPDAIILPGSKNTLGDLAALRSRGMAEALCALRSAEGGHLGPVIVGICGGFQMMGRFLADPQGVESDHACTEAGLGLLPVTTEMGSAKVLRRTSAKTVSGWCGAGVAAGLMPGTGGGHGGAEVCPGEGYAVHGYEIHHGVTTPDAGGGAVLVCLHESDGSPAGWTTPDGQVWGTYLHGVFDADGFRRGWLDALRVRRGLEPVGRVVARYDLDPALDRLADVVREAVDMGHIYSVLGLSPKGRRQT.

One can recognise a GATase cobBQ-type domain in the interval 260 to 483; that stretch reads MLDIVLVDLP…LHGVFDADGF (224 aa). The active-site Nucleophile is the Cys-346. The active site involves His-475.

The protein belongs to the CobB/CobQ family. CobQ subfamily.

It participates in cofactor biosynthesis; adenosylcobalamin biosynthesis. Its function is as follows. Catalyzes amidations at positions B, D, E, and G on adenosylcobyrinic A,C-diamide. NH(2) groups are provided by glutamine, and one molecule of ATP is hydrogenolyzed for each amidation. The sequence is that of Cobyric acid synthase from Nitratidesulfovibrio vulgaris (strain ATCC 29579 / DSM 644 / CCUG 34227 / NCIMB 8303 / VKM B-1760 / Hildenborough) (Desulfovibrio vulgaris).